Here is a 369-residue protein sequence, read N- to C-terminus: Chaperone protein DnaJ (369 aa).

The J domain maps to 5–69; sequence DYYDVLGISK…NKKAQYDRFG (65 aa). The CR-type zinc-finger motif lies at 131 to 213; the sequence is GTTKNVSVDI…CSGAGRVKAK (83 aa). Zn(2+) is bound by residues cysteine 144, cysteine 147, cysteine 161, cysteine 164, cysteine 187, cysteine 190, cysteine 201, and cysteine 204. CXXCXGXG motif repeat units lie at residues 144-151, 161-168, 187-194, and 201-208; these read CGHCHGSG, CSKCHGQG, CPQCQGEG, and CHVCSGAG.

The protein belongs to the DnaJ family. Homodimer. Zn(2+) serves as cofactor.

The protein localises to the cytoplasm. Functionally, participates actively in the response to hyperosmotic and heat shock by preventing the aggregation of stress-denatured proteins and by disaggregating proteins, also in an autonomous, DnaK-independent fashion. Unfolded proteins bind initially to DnaJ; upon interaction with the DnaJ-bound protein, DnaK hydrolyzes its bound ATP, resulting in the formation of a stable complex. GrpE releases ADP from DnaK; ATP binding to DnaK triggers the release of the substrate protein, thus completing the reaction cycle. Several rounds of ATP-dependent interactions between DnaJ, DnaK and GrpE are required for fully efficient folding. Also involved, together with DnaK and GrpE, in the DNA replication of plasmids through activation of initiation proteins. In Acholeplasma laidlawii, this protein is Chaperone protein DnaJ.